Here is a 303-residue protein sequence, read N- to C-terminus: Aspartate carbamoyltransferase catalytic subunit (303 aa).

Positions 51 and 52 each coordinate carbamoyl phosphate. Residue lysine 80 coordinates L-aspartate. Carbamoyl phosphate contacts are provided by arginine 101, histidine 129, and glutamine 132. 2 residues coordinate L-aspartate: arginine 162 and arginine 221. Leucine 260 and proline 261 together coordinate carbamoyl phosphate.

The protein belongs to the aspartate/ornithine carbamoyltransferase superfamily. ATCase family. As to quaternary structure, heterooligomer of catalytic and regulatory chains.

The catalysed reaction is carbamoyl phosphate + L-aspartate = N-carbamoyl-L-aspartate + phosphate + H(+). Its pathway is pyrimidine metabolism; UMP biosynthesis via de novo pathway; (S)-dihydroorotate from bicarbonate: step 2/3. Its function is as follows. Catalyzes the condensation of carbamoyl phosphate and aspartate to form carbamoyl aspartate and inorganic phosphate, the committed step in the de novo pyrimidine nucleotide biosynthesis pathway. The polypeptide is Aspartate carbamoyltransferase catalytic subunit (Saccharolobus solfataricus (strain ATCC 35092 / DSM 1617 / JCM 11322 / P2) (Sulfolobus solfataricus)).